We begin with the raw amino-acid sequence, 485 residues long: uncharacterized protein (485 aa).

3 consecutive transmembrane segments (helical) span residues 284-304, 328-348, and 353-373; these read LLAL…YPLF, LLDL…SFIK, and LALT…YNCL.

This sequence belongs to the CBF/MAK21 family.

The protein localises to the membrane. This is an uncharacterized protein from Schizosaccharomyces pombe (strain 972 / ATCC 24843) (Fission yeast).